A 513-amino-acid polypeptide reads, in one-letter code: ATP synthase subunit alpha (513 aa).

Residue G169 to T176 coordinates ATP.

Belongs to the ATPase alpha/beta chains family. In terms of assembly, F-type ATPases have 2 components, CF(1) - the catalytic core - and CF(0) - the membrane proton channel. CF(1) has five subunits: alpha(3), beta(3), gamma(1), delta(1), epsilon(1). CF(0) has three main subunits: a(1), b(2) and c(9-12). The alpha and beta chains form an alternating ring which encloses part of the gamma chain. CF(1) is attached to CF(0) by a central stalk formed by the gamma and epsilon chains, while a peripheral stalk is formed by the delta and b chains.

The protein resides in the cell inner membrane. It catalyses the reaction ATP + H2O + 4 H(+)(in) = ADP + phosphate + 5 H(+)(out). Produces ATP from ADP in the presence of a proton gradient across the membrane. The alpha chain is a regulatory subunit. The sequence is that of ATP synthase subunit alpha from Shewanella piezotolerans (strain WP3 / JCM 13877).